The following is a 104-amino-acid chain: Large ribosomal subunit protein uL24 (104 aa).

Belongs to the universal ribosomal protein uL24 family. As to quaternary structure, part of the 50S ribosomal subunit.

One of two assembly initiator proteins, it binds directly to the 5'-end of the 23S rRNA, where it nucleates assembly of the 50S subunit. In terms of biological role, one of the proteins that surrounds the polypeptide exit tunnel on the outside of the subunit. This Saccharopolyspora erythraea (strain ATCC 11635 / DSM 40517 / JCM 4748 / NBRC 13426 / NCIMB 8594 / NRRL 2338) protein is Large ribosomal subunit protein uL24.